Here is a 345-residue protein sequence, read N- to C-terminus: Ferritin-like-encapsulin shell fusion protein (345 aa).

Residues 1–109 form a ferritin-like domain region; that stretch reads MLSINPTLIN…INDNKKEESN (109 aa). 3 residues coordinate Fe cation: E31, E61, and H64. Residues 110–345 are encapsulin domain; the sequence is VEYFEKLRSA…KNPEAIVVLE (236 aa).

The protein in the N-terminal section; belongs to the ferritin-like superfamily. This sequence in the C-terminal section; belongs to the encapsulin family. Family 1 subfamily. In terms of assembly, 180 monomers assemble into 12 pentamers and 20 hexamers which further assemble into an icosahedral particle about 36.6 nm in diameter. The N-terminal domain (residues 1-99) crystallizes as 3 decamers.

It is found in the encapsulin nanocompartment. The enzyme catalyses 4 Fe(2+) + O2 + 4 H(+) = 4 Fe(3+) + 2 H2O. Its activity is regulated as follows. The ferroxidase activity is inhibited by zinc. In terms of biological role, fusion of the shell and cargo protein of a type 1 encapsulin nanocompartment. The nanocompartment is probably involved in iron storage. Expression in E.coli generates spherical particles (PfSPs) about 30 nm in diameter. The purified N-terminus has ferroxidase activity. This is Ferritin-like-encapsulin shell fusion protein from Pyrococcus furiosus (strain ATCC 43587 / DSM 3638 / JCM 8422 / Vc1).